A 170-amino-acid polypeptide reads, in one-letter code: Adenine phosphoribosyltransferase (170 aa).

It belongs to the purine/pyrimidine phosphoribosyltransferase family. Homodimer.

It localises to the cytoplasm. It carries out the reaction AMP + diphosphate = 5-phospho-alpha-D-ribose 1-diphosphate + adenine. It functions in the pathway purine metabolism; AMP biosynthesis via salvage pathway; AMP from adenine: step 1/1. In terms of biological role, catalyzes a salvage reaction resulting in the formation of AMP, that is energically less costly than de novo synthesis. The sequence is that of Adenine phosphoribosyltransferase from Fusobacterium nucleatum subsp. nucleatum (strain ATCC 25586 / DSM 15643 / BCRC 10681 / CIP 101130 / JCM 8532 / KCTC 2640 / LMG 13131 / VPI 4355).